A 155-amino-acid polypeptide reads, in one-letter code: FHA domain-containing protein FhaB (155 aa).

Residues 6-28 (LQLTRVGFLLLLWLFIWSVLRIL) traverse the membrane as a helical segment. A Phosphothreonine modification is found at Thr36. The FHA domain occupies 83–132 (VLIGRADDSTLVLTDDYASTRHARLSPRGSEWYVEDLGSTNGTYLDRAKV).

Post-translationally, phosphorylated by PknB. Dephosphorylated by PstP.

The protein localises to the cell membrane. This is FHA domain-containing protein FhaB (fhaB) from Mycolicibacterium smegmatis (strain ATCC 700084 / mc(2)155) (Mycobacterium smegmatis).